The sequence spans 390 residues: Malonyl-CoA-acyl carrier protein transacylase, mitochondrial (390 aa).

The transit peptide at 1 to 21 (MSVRVARVAWVRGLGASYRRG) directs the protein to the mitochondrion. Residues S153 and H270 contribute to the active site. An N6-succinyllysine modification is found at K314.

It belongs to the type II malonyltransferase family.

It localises to the mitochondrion. It catalyses the reaction holo-[ACP] + malonyl-CoA = malonyl-[ACP] + CoA. It participates in lipid metabolism; fatty acid biosynthesis. Functionally, catalyzes the transfer of a malonyl moiety from malonyl-CoA to the free thiol group of the phosphopantetheine arm of the mitochondrial ACP protein (NDUFAB1). This suggests the existence of the biosynthesis of fatty acids in mitochondria. Also acts as a mitochondrial small ribosomal subunit (mt-SSU) assembly factor. In Homo sapiens (Human), this protein is Malonyl-CoA-acyl carrier protein transacylase, mitochondrial.